The primary structure comprises 189 residues: UPF0149 protein VFMJ11_2207 (189 aa).

Belongs to the UPF0149 family.

This is UPF0149 protein VFMJ11_2207 from Aliivibrio fischeri (strain MJ11) (Vibrio fischeri).